The chain runs to 41 residues: Large ribosomal subunit protein bL36 (41 aa).

It belongs to the bacterial ribosomal protein bL36 family.

The sequence is that of Large ribosomal subunit protein bL36 from Bradyrhizobium diazoefficiens (strain JCM 10833 / BCRC 13528 / IAM 13628 / NBRC 14792 / USDA 110).